We begin with the raw amino-acid sequence, 939 residues long: Protein translocase subunit SecA (939 aa).

Residues Q85, 103-107 (GEGKT), and D504 contribute to the ATP site. The disordered stretch occupies residues 850–939 (PVQDGAERPS…KGGGGRRRKK (90 aa)). Positions 854-864 (GAERPSLEKEG) are enriched in basic and acidic residues. Basic residues predominate over residues 924–939 (ERRKAQKGGGGRRRKK).

Belongs to the SecA family. Monomer and homodimer. Part of the essential Sec protein translocation apparatus which comprises SecA, SecYEG and auxiliary proteins SecDF. Other proteins may also be involved.

It localises to the cell membrane. The protein localises to the cytoplasm. It carries out the reaction ATP + H2O + cellular proteinSide 1 = ADP + phosphate + cellular proteinSide 2.. Functionally, part of the Sec protein translocase complex. Interacts with the SecYEG preprotein conducting channel. Has a central role in coupling the hydrolysis of ATP to the transfer of proteins into and across the cell membrane, serving as an ATP-driven molecular motor driving the stepwise translocation of polypeptide chains across the membrane. The polypeptide is Protein translocase subunit SecA (Streptomyces griseus subsp. griseus (strain JCM 4626 / CBS 651.72 / NBRC 13350 / KCC S-0626 / ISP 5235)).